The chain runs to 520 residues: GMP synthase [glutamine-hydrolyzing] (520 aa).

A Glutamine amidotransferase type-1 domain is found at Thr-9–Gly-202. The active-site Nucleophile is Cys-86. Active-site residues include His-176 and Glu-178. The GMPS ATP-PPase domain occupies Trp-203–Arg-395. Ser-230–Ser-236 contributes to the ATP binding site.

As to quaternary structure, homodimer.

The enzyme catalyses XMP + L-glutamine + ATP + H2O = GMP + L-glutamate + AMP + diphosphate + 2 H(+). It functions in the pathway purine metabolism; GMP biosynthesis; GMP from XMP (L-Gln route): step 1/1. In terms of biological role, catalyzes the synthesis of GMP from XMP. This is GMP synthase [glutamine-hydrolyzing] from Brucella abortus (strain S19).